The following is a 123-amino-acid chain: Large ribosomal subunit protein uL14c (123 aa).

The protein belongs to the universal ribosomal protein uL14 family. As to quaternary structure, part of the 50S ribosomal subunit.

Its subcellular location is the plastid. The protein resides in the chloroplast. Its function is as follows. Binds to 23S rRNA. This is Large ribosomal subunit protein uL14c from Saccharum hybrid (Sugarcane).